The primary structure comprises 805 residues: Endonuclease MutS2 (805 aa).

344–351 is an ATP binding site; the sequence is GPNGGGKT. The disordered stretch occupies residues 705–724; sequence RSRSEKLQAASEARPSAPPG. The Smr domain maps to 729–804; it reads LDVRGLRVEE…GDAVTVVSLR (76 aa).

The protein belongs to the DNA mismatch repair MutS family. MutS2 subfamily. In terms of assembly, homodimer. Binds to stalled ribosomes, contacting rRNA.

Functionally, endonuclease that is involved in the suppression of homologous recombination and thus may have a key role in the control of bacterial genetic diversity. Its function is as follows. Acts as a ribosome collision sensor, splitting the ribosome into its 2 subunits. Detects stalled/collided 70S ribosomes which it binds and splits by an ATP-hydrolysis driven conformational change. Acts upstream of the ribosome quality control system (RQC), a ribosome-associated complex that mediates the extraction of incompletely synthesized nascent chains from stalled ribosomes and their subsequent degradation. Probably generates substrates for RQC. The protein is Endonuclease MutS2 of Anaeromyxobacter sp. (strain Fw109-5).